A 183-amino-acid chain; its full sequence is Bifunctional protein PyrR (183 aa).

The PRPP-binding signature appears at 102 to 114; the sequence is VVLVDDVLFSGRT.

Belongs to the purine/pyrimidine phosphoribosyltransferase family. PyrR subfamily.

The enzyme catalyses UMP + diphosphate = 5-phospho-alpha-D-ribose 1-diphosphate + uracil. Regulates the transcription of the pyrimidine nucleotide (pyr) operon in response to exogenous pyrimidines. In terms of biological role, also displays a weak uracil phosphoribosyltransferase activity which is not physiologically significant. In Leifsonia xyli subsp. xyli (strain CTCB07), this protein is Bifunctional protein PyrR.